The primary structure comprises 530 residues: Autoinducer-2 kinase (530 aa).

The protein belongs to the FGGY kinase family.

It localises to the cytoplasm. The enzyme catalyses (S)-4,5-dihydroxypentane-2,3-dione + ATP = (2S)-2-hydroxy-3,4-dioxopentyl phosphate + ADP + H(+). Functionally, catalyzes the phosphorylation of autoinducer-2 (AI-2) to phospho-AI-2, which subsequently inactivates the transcriptional regulator LsrR and leads to the transcription of the lsr operon. Phosphorylates the ring-open form of (S)-4,5-dihydroxypentane-2,3-dione (DPD), which is the precursor to all AI-2 signaling molecules, at the C5 position. The protein is Autoinducer-2 kinase of Salmonella paratyphi A (strain ATCC 9150 / SARB42).